The following is a 165-amino-acid chain: Ubiquitin D (165 aa).

Ubiquitin-like domains lie at 6-81 (SCLC…LKVV) and 90-163 (LFLV…CYCI).

This sequence belongs to the ubiquitin D family. As to quaternary structure, interacts directly with the 26S proteasome. Interacts with NUB1; this interaction facilitates the linking of UBD-conjugated target protein to the proteasome complex and accelerates its own degradation and that of its conjugates. Interacts (via ubiquitin-like 1 domain) with the spindle checkpoint protein MAD2L1 during mitosis. Present in aggresomes of proteasome inhibited cells. Interacts with HDAC6 under proteasome impairment conditions. Forms a thioester with UBA6 in cells stimulated with tumor necrosis factor-alpha (TNFa) and interferon-gamma (IFNg). Interacts with SQSTM1 and TP53/p53. In terms of processing, can be acetylated. In terms of tissue distribution, constitutively expressed in mature dendritic cells and B-cells. Mostly expressed in the reticuloendothelial system (e.g. thymus, spleen), the gastrointestinal system, kidney, lung and prostate gland.

The protein resides in the nucleus. Its subcellular location is the cytoplasm. Ubiquitin-like protein modifier which can be covalently attached to target proteins and subsequently leads to their degradation by the 26S proteasome, in a NUB1-dependent manner. Conjugation to the target protein is activated by UBA6 via adenylation of its C-terminal glycine. Promotes the expression of the proteasome subunit beta type-9 (PSMB9/LMP2). Regulates TNF-alpha-induced and LPS-mediated activation of the central mediator of innate immunity NF-kappa-B by promoting TNF-alpha-mediated proteasomal degradation of ubiquitinated-I-kappa-B-alpha. Required for TNF-alpha-induced p65 nuclear translocation in renal tubular epithelial cells (RTECs). May be involved in dendritic cell (DC) maturation, the process by which immature dendritic cells differentiate into fully competent antigen-presenting cells that initiate T-cell responses. Mediates mitotic non-disjunction and chromosome instability, in long-term in vitro culture and cancers, by abbreviating mitotic phase and impairing the kinetochore localization of MAD2L1 during the prometaphase stage of the cell cycle. May be involved in the formation of aggresomes when proteasome is saturated or impaired. Mediates apoptosis in a caspase-dependent manner, especially in renal epithelium and tubular cells during renal diseases such as polycystic kidney disease and Human immunodeficiency virus (HIV)-associated nephropathy (HIVAN). In Homo sapiens (Human), this protein is Ubiquitin D (UBD).